The following is a 399-amino-acid chain: Acetate kinase (399 aa).

Mg(2+) is bound at residue Asn10. Lys17 is an ATP binding site. Substrate is bound at residue Arg91. Asp148 acts as the Proton donor/acceptor in catalysis. Residues 208–212, 283–285, and 331–335 contribute to the ATP site; these read HLGNG, DCR, and GIGEN. Glu385 lines the Mg(2+) pocket.

The protein belongs to the acetokinase family. Homodimer. Requires Mg(2+) as cofactor. It depends on Mn(2+) as a cofactor.

The protein localises to the cytoplasm. It catalyses the reaction acetate + ATP = acetyl phosphate + ADP. Its pathway is metabolic intermediate biosynthesis; acetyl-CoA biosynthesis; acetyl-CoA from acetate: step 1/2. Functionally, catalyzes the formation of acetyl phosphate from acetate and ATP. Can also catalyze the reverse reaction. The sequence is that of Acetate kinase from Shewanella sp. (strain ANA-3).